The chain runs to 444 residues: Homogentisate 1,2-dioxygenase (444 aa).

His298 functions as the Proton acceptor in the catalytic mechanism. The Fe cation site is built by His341 and Glu347. Residues Tyr356 and His377 each coordinate homogentisate. His377 provides a ligand contact to Fe cation.

It belongs to the homogentisate dioxygenase family. Hexamer; dimer of trimers. It depends on Fe cation as a cofactor.

It catalyses the reaction homogentisate + O2 = 4-maleylacetoacetate + H(+). It participates in amino-acid degradation; L-phenylalanine degradation; acetoacetate and fumarate from L-phenylalanine: step 4/6. Involved in the catabolism of homogentisate (2,5-dihydroxyphenylacetate or 2,5-OH-PhAc), a central intermediate in the degradation of phenylalanine and tyrosine. Catalyzes the oxidative ring cleavage of the aromatic ring of homogentisate to yield maleylacetoacetate. The sequence is that of Homogentisate 1,2-dioxygenase from Burkholderia orbicola (strain AU 1054).